The primary structure comprises 829 residues: Transmembrane protease serine 7 (829 aa).

Topologically, residues 1–62 (MDKEKSDPSC…RAPFWNVQNK (62 aa)) are cytoplasmic. A disordered region spans residues 26 to 52 (SVPGKLPGRRPPRKPIGKPRPRKQPKK). Residues 32 to 52 (PGRRPPRKPIGKPRPRKQPKK) are compositionally biased toward basic residues. Residues 63–83 (IILFTVFLFILAVTAWTLLWL) traverse the membrane as a helical; Signal-anchor for type II membrane protein segment. Residues 84 to 829 (YISKTESKDA…WIHKYVPSLL (746 aa)) lie on the Extracellular side of the membrane. One can recognise an SEA domain in the interval 92–220 (DAFYFVGMFR…DSVVLNAGLR (129 aa)). 3 disulfides stabilise this stretch: C233–C259, C285–C308, and C351–C382. CUB domains lie at 233-346 (CSRY…FEVI) and 351-467 (CEST…YNIS). N-linked (GlcNAc...) asparagine glycans are attached at residues N401 and N465. LDL-receptor class A domains follow at residues 469-505 (PCPA…LFCV), 503-540 (FCVT…QNCT), and 544-581 (PCTS…EGCG). Intrachain disulfides connect C470–C482, C477–C495, C489–C504, C511–C530, C524–C539, C545–C557, C552–C571, C565–C580, and C617–C633. Residues 592–826 (IVGGSDSQEG…FVPWIHKYVP (235 aa)) form the Peptidase S1 domain. Active-site charge relay system residues include H632 and D680. 3 disulfide bridges follow: C716-C782, C748-C761, and C772-C802. S776 functions as the Charge relay system in the catalytic mechanism.

This sequence belongs to the peptidase S1 family. Forms a heterodimer with SERPINA5. In terms of processing, N-glycosylated. Expressed in brain, eye, testis, skin, epididymis and salivary gland with lower levels in heart, skeletal muscle, thymus, ovary, prostate and uterus.

The protein localises to the cell membrane. Its function is as follows. Serine protease which preferentially hydrolyzes peptides with Arg at the P1 position. In Mus musculus (Mouse), this protein is Transmembrane protease serine 7 (Tmprss7).